Consider the following 363-residue polypeptide: Protein EXORDIUM-like 5 (363 aa).

Positions 1–25 (MSSPATTITFFFFFTLSSFFYITSS) are cleaved as a signal peptide. Asn-144 carries N-linked (GlcNAc...) asparagine glycosylation.

Belongs to the EXORDIUM family.

The protein resides in the secreted. It is found in the extracellular space. Its subcellular location is the apoplast. Functionally, may play a role in a brassinosteroid-dependent regulation of growth and development. This Arabidopsis thaliana (Mouse-ear cress) protein is Protein EXORDIUM-like 5 (EXL5).